A 166-amino-acid chain; its full sequence is Protein YciF (166 aa).

In terms of assembly, homodimer.

This Escherichia coli (strain K12) protein is Protein YciF (yciF).